The following is a 218-amino-acid chain: Uracil-DNA glycosylase (218 aa).

The active-site Proton acceptor is Asp-60.

It belongs to the uracil-DNA glycosylase (UDG) superfamily. UNG family.

It localises to the cytoplasm. It carries out the reaction Hydrolyzes single-stranded DNA or mismatched double-stranded DNA and polynucleotides, releasing free uracil.. In terms of biological role, excises uracil residues from the DNA which can arise as a result of misincorporation of dUMP residues by DNA polymerase or due to deamination of cytosine. The chain is Uracil-DNA glycosylase from Francisella philomiragia subsp. philomiragia (strain ATCC 25017 / CCUG 19701 / FSC 153 / O#319-036).